The following is a 101-amino-acid chain: Putative metal transport protein HQ_3622A (101 aa).

The signal sequence occupies residues 1–32 (MKIISMSMDSWIQRAALMLLGLVIVAPFFGWT). The chain crosses the membrane as a helical span at residues 75 to 95 (IGTLISAGVGTVLTLIVAFGA).

It is found in the cell membrane. In terms of biological role, may be involved in metal transport. This is Putative metal transport protein HQ_3622A from Haloquadratum walsbyi (strain DSM 16790 / HBSQ001).